Consider the following 356-residue polypeptide: Phospho-2-dehydro-3-deoxyheptonate aldolase, Tyr-sensitive (356 aa).

The protein belongs to the class-I DAHP synthase family. The cofactor is a divalent metal cation.

It catalyses the reaction D-erythrose 4-phosphate + phosphoenolpyruvate + H2O = 7-phospho-2-dehydro-3-deoxy-D-arabino-heptonate + phosphate. The protein operates within metabolic intermediate biosynthesis; chorismate biosynthesis; chorismate from D-erythrose 4-phosphate and phosphoenolpyruvate: step 1/7. With respect to regulation, specifically feedback inhibited by tyrosine with 50% inhibition observed at 9 microM tyrosine, pH 7.0. Its function is as follows. Stereospecific condensation of phosphoenolpyruvate (PEP) and D-erythrose-4-phosphate (E4P) giving rise to 3-deoxy-D-arabino-heptulosonate-7-phosphate (DAHP). The sequence is that of Phospho-2-dehydro-3-deoxyheptonate aldolase, Tyr-sensitive (aroF) from Escherichia coli (strain K12).